A 265-amino-acid chain; its full sequence is Leucyl/phenylalanyl-tRNA--protein transferase (265 aa).

The segment at 244 to 265 (LDTGPDPASSSVTEISLRPAAP) is disordered.

The protein belongs to the L/F-transferase family.

The protein resides in the cytoplasm. It carries out the reaction N-terminal L-lysyl-[protein] + L-leucyl-tRNA(Leu) = N-terminal L-leucyl-L-lysyl-[protein] + tRNA(Leu) + H(+). The catalysed reaction is N-terminal L-arginyl-[protein] + L-leucyl-tRNA(Leu) = N-terminal L-leucyl-L-arginyl-[protein] + tRNA(Leu) + H(+). It catalyses the reaction L-phenylalanyl-tRNA(Phe) + an N-terminal L-alpha-aminoacyl-[protein] = an N-terminal L-phenylalanyl-L-alpha-aminoacyl-[protein] + tRNA(Phe). Functionally, functions in the N-end rule pathway of protein degradation where it conjugates Leu, Phe and, less efficiently, Met from aminoacyl-tRNAs to the N-termini of proteins containing an N-terminal arginine or lysine. In Methylibium petroleiphilum (strain ATCC BAA-1232 / LMG 22953 / PM1), this protein is Leucyl/phenylalanyl-tRNA--protein transferase.